The following is a 175-amino-acid chain: Urease accessory protein UreE (175 aa).

Positions 134–175 are disordered; it reads FQPESGAYGGGHHHGDESATDLHNPGHGPHRSVPKIHEFKPR.

Belongs to the UreE family.

The protein localises to the cytoplasm. Functionally, involved in urease metallocenter assembly. Binds nickel. Probably functions as a nickel donor during metallocenter assembly. The sequence is that of Urease accessory protein UreE from Dechloromonas aromatica (strain RCB).